A 500-amino-acid chain; its full sequence is NAD(P)H-quinone oxidoreductase chain 4, chloroplastic (500 aa).

A run of 14 helical transmembrane segments spans residues 4-24 (FPWLTIIIVLPIFAGFLILFL), 37-57 (LCICIIELLLTTYAFGYHFQL), 84-104 (GISIGPILLTGFITTLATLAA), 111-129 (SRVFHFLMLAMYSGQIGPF), 134-154 (LLLFFIMWELELIPVYLLLSM), 167-187 (FILYTAGSSAFLLVGILGICL), 208-228 (ALEMLFYIGFFIAFAVKSPII), 242-262 (HYSTCMLLAGILLKMGAYGLV), 272-292 (AHSIFSPWLMIVGTIQIIYAA), 305-325 (IAYSSVSHMGFIIIGLGSIND), 330-350 (GAILQIISHGFIGAALFFLAG), 386-406 (LALPGMSGFVAELILFFGILT), 416-436 (ILITFVMAIGMILTPIYSLSM), and 462-482 (FFVSISILLPVIAIGIYPDFV).

It belongs to the complex I subunit 4 family.

It localises to the plastid. The protein localises to the chloroplast thylakoid membrane. It catalyses the reaction a plastoquinone + NADH + (n+1) H(+)(in) = a plastoquinol + NAD(+) + n H(+)(out). The enzyme catalyses a plastoquinone + NADPH + (n+1) H(+)(in) = a plastoquinol + NADP(+) + n H(+)(out). This is NAD(P)H-quinone oxidoreductase chain 4, chloroplastic from Morus indica (Mulberry).